A 173-amino-acid polypeptide reads, in one-letter code: NADH-ubiquinone oxidoreductase chain 6 (173 aa).

The next 5 membrane-spanning stretches (helical) occupy residues 1–21 (MTYFVLFLGLCFVLGGLAVAS), 27–47 (YGVVGLVLASVAGCGWLLSLG), 48–68 (ASFVSLVLFMVYLGGMLVVFV), 87–107 (VIGYGMGFIVVLVVGVVISGF), and 139–159 (WGVGMFLAAGWGLLLTLFVVL).

The protein belongs to the complex I subunit 6 family.

It localises to the mitochondrion membrane. It catalyses the reaction a ubiquinone + NADH + 5 H(+)(in) = a ubiquinol + NAD(+) + 4 H(+)(out). Functionally, core subunit of the mitochondrial membrane respiratory chain NADH dehydrogenase (Complex I) that is believed to belong to the minimal assembly required for catalysis. Complex I functions in the transfer of electrons from NADH to the respiratory chain. The immediate electron acceptor for the enzyme is believed to be ubiquinone. The chain is NADH-ubiquinone oxidoreductase chain 6 (MT-ND6) from Brachyramphus marmoratus (Marbled murrelet).